The sequence spans 84 residues: uncharacterized protein (84 aa).

The stretch at K5–E31 forms a coiled coil.

This is an uncharacterized protein from Methanocaldococcus jannaschii (strain ATCC 43067 / DSM 2661 / JAL-1 / JCM 10045 / NBRC 100440) (Methanococcus jannaschii).